A 484-amino-acid chain; its full sequence is MNNFIEFDTSSLWIALPEIFLLSAIVIVLLIDLFLDKNFKQVTYYLIQLSLFITGLLAFNLIDHPQIIIFGGSFVLDNMASVFKVFMMAATMVAMVYSRHYLRTHSLFRGEYFVLVLLSVLGMMVMVSGYSLLTLYLGLEILSLSLYALIAIARERADAIEAALKYFVLGAIASGLLLYGMSMIYGISGSLNINDIASFASNTNLDSRETLIINFGLVFLVIGIAFKLGAVPFHMWVPDVYQGAPTSVTLFISTVPKIAAFAMLVRILVDGLDSMHAYWSDLFMVLSILSIALGSVVALMQSNIKRMLAYSTISHVGFIMLGFVAGTPIGYGAAAFYMLVYVLMSLAAFGMIILLNKQGFEIDQISDFKGLNKHAPWFALMMLIIILSMAGVPPLVGFYSKFFILQQVVSAGFITIAVIVVIFAVISAYYYLQIIKSMYFDETDKKITIYASIDIQLVLSINAILILAVGLFPDFWMKLALSLF.

14 helical membrane passes run 11-31 (SLWI…VLLI), 42-62 (VTYY…FNLI), 79-98 (MASV…MVYS), 113-133 (FVLV…YSLL), 134-154 (TLYL…AIAR), 167-187 (FVLG…IYGI), 211-231 (LIIN…LGAV), 248-268 (VTLF…VRIL), 279-299 (WSDL…VVAL), 313-333 (ISHV…GYGA), 335-355 (AFYM…IILL), 378-398 (FALM…LVGF), 408-428 (VVSA…VISA), and 457-477 (LVLS…DFWM).

It belongs to the complex I subunit 2 family. As to quaternary structure, NDH-1 is composed of 14 different subunits. Subunits NuoA, H, J, K, L, M, N constitute the membrane sector of the complex.

The protein localises to the cell inner membrane. The catalysed reaction is a quinone + NADH + 5 H(+)(in) = a quinol + NAD(+) + 4 H(+)(out). NDH-1 shuttles electrons from NADH, via FMN and iron-sulfur (Fe-S) centers, to quinones in the respiratory chain. The immediate electron acceptor for the enzyme in this species is believed to be ubiquinone. Couples the redox reaction to proton translocation (for every two electrons transferred, four hydrogen ions are translocated across the cytoplasmic membrane), and thus conserves the redox energy in a proton gradient. The sequence is that of NADH-quinone oxidoreductase subunit N from Ruthia magnifica subsp. Calyptogena magnifica.